Here is a 598-residue protein sequence, read N- to C-terminus: Nuclear receptor subfamily 4 group A member 2 (598 aa).

The tract at residues 1–22 is disordered; sequence MPCVQAQYGSSPQGASPASQGY. The span at 7-18 shows a compositional bias: polar residues; it reads QYGSSPQGASPA. The segment at residues 260-335 is a DNA-binding region (nuclear receptor); that stretch reads EGLCAVCGDN…VGMVKEVVRT (76 aa). NR C4-type zinc fingers lie at residues 263–283 and 299–318; these read CAVC…CEGC and CLAN…CQYC. Residues 287–314 carry the Bipartite nuclear localization signal (NLS1) motif; sequence FKRTVQKNAKYVCLANKNCPVDKRRRNR. The tract at residues 337–361 is disordered; sequence SLKGRRGRLPSKPKSPQEPSPPSPP. The Nuclear localization signal (NLS1) motif lies at 338-350; sequence LKGRRGRLPSKPK. Pro residues predominate over residues 352–361; it reads PQEPSPPSPP. One can recognise an NR LBD domain in the interval 360–595; it reads PPVSLISALV…AIIDKLFLDT (236 aa). The nuclear export sequence (NES1) signature appears at 443–452; that stretch reads FLELFVLRLA. Positions 568-577 match the nuclear export sequence (NES2) motif; the sequence is QGLQRIFYLK.

Belongs to the nuclear hormone receptor family. Interacts with SFPQ, NCOR2, SIN3A and HADC1. The interaction with NCOR2 increases in the absence of PITX3. Interacts with PER2.

The protein localises to the cytoplasm. Its subcellular location is the nucleus. Functionally, transcriptional regulator which is important for the differentiation and maintenance of meso-diencephalic dopaminergic (mdDA) neurons during development. It is crucial for expression of a set of genes such as SLC6A3, SLC18A2, TH and DRD2 which are essential for development of mdDA neurons. The polypeptide is Nuclear receptor subfamily 4 group A member 2 (NR4A2) (Pongo abelii (Sumatran orangutan)).